The following is a 417-amino-acid chain: PRKCA-binding protein (417 aa).

One can recognise a PDZ domain in the interval 22-105; the sequence is KVTLQKDAQN…EVTIHYNKLQ (84 aa). 2 residues coordinate Zn(2+): C44 and C46. Residue T82 is modified to Phosphothreonine. An AH domain is found at 144–357; sequence LCNDGLVKRL…CYSVLRDADV (214 aa). A disordered region spans residues 375-417; it reads QDEFTDGEDEEDEDEEDTAAGEPPRDSRGAAGPLDKGGSWCNS. Residues 377 to 393 are compositionally biased toward acidic residues; it reads EFTDGEDEEDEDEEDTA. A lipid anchor (S-palmitoyl cysteine; by DHHC8) is attached at C415.

In terms of assembly, monomer and homodimer. Interacts with CXADR. Interacts presynaptically with the glutamate receptors GRIA2, GRIA3, GRIK3, isoform 3 of GRIA4, isoform A of GRM4, GRM7 and GRM8; with NAPA and NAPB; and with BTG2. The interaction with NAPA and NAPB disrupts the interaction with GRIA2, conducting to the internalization of GRIA2. Interacts with PRKCA; with the amine transporters SLC6A2 and SLC6A3; with the channels ASIC1 and ASIC2; with the GTP-binding proteins ARF1 and ARF3; with the ephrin receptor tyrosine kinases EPHA7, EPHB1 and EPHB2; with ERBB2 and through its PDZ domain with the C-terminal tail of PRLHR. Interacts with UNC5A. Interacts (via AH domain) with NCS1/FREQ; in a calcium-dependent manner. Interacts with F-actin and associates with the ARP2/3 complex. Interacts (via PDZ domain) with ARF1 (activated); the interaction blocks Arp2/3 complex inhibition. Interacts with SORCS3. In terms of processing, phosphorylation at Thr-82 appears to inhibit the interaction with AMPA receptors. Palmitoylation on Cys-415 is essential for long-term synaptic depression (LTD).

It localises to the cytoplasm. It is found in the perinuclear region. The protein localises to the membrane. The protein resides in the postsynaptic density. Its subcellular location is the synapse. It localises to the synaptosome. It is found in the cytoskeleton. Its function is as follows. Probable adapter protein that bind to and organize the subcellular localization of a variety of membrane proteins containing some PDZ recognition sequence. Involved in the clustering of various receptors, possibly by acting at the receptor internalization level. Plays a role in synaptic plasticity by regulating the trafficking and internalization of AMPA receptors. May be regulated upon PRKCA activation. May regulate ASIC1/ASIC3 channel. Regulates actin polymerization by inhibiting the actin-nucleating activity of the Arp2/3 complex; the function is competitive with nucleation promoting factors and is linked to neuronal morphology regulation and AMPA receptor (AMPAR) endocytosis. Via interaction with the Arp2/3 complex involved in regulation of synaptic plasicity of excitatory synapses and required for spine shrinkage during long-term depression (LTD). Involved in regulation of astrocyte morphology, antagonistic to Arp2/3 complex activator WASL/N-WASP function. This Bos taurus (Bovine) protein is PRKCA-binding protein (PICK1).